The following is a 176-amino-acid chain: Dual-action ribosomal maturation protein DarP (176 aa).

It belongs to the DarP family.

The protein resides in the cytoplasm. Its function is as follows. Member of a network of 50S ribosomal subunit biogenesis factors which assembles along the 30S-50S interface, preventing incorrect 23S rRNA structures from forming. Promotes peptidyl transferase center (PTC) maturation. The protein is Dual-action ribosomal maturation protein DarP of Haemophilus ducreyi (strain 35000HP / ATCC 700724).